The primary structure comprises 2554 residues: MGSLSAVPATNGNHAALNGSASTNGQHVNGSTHVNGNHSLNGSAQVNGHSATTANLEPIAVVGMSCRLPGDATDTQKLWELITKGRSAWSKVPTDRWNQEAFHDPAAEGKPGRTSTDGGHFLKDDIKAFDASFFGVNPIEATAMDPQQRLVLEIAYEAFENAGLTLQQLSGSNTGVYVGLWASDYQEMLLRDIDFPPIYQASGVGAAIASNRVSYCFNLHGPSLTLDTGCSASLVALHQAVHSLRAGETDKCFVAGVNLQLDPQRYGYQNKLSMFSKQGKSFTFDHRAKGASGYGRGEGCSGVVLMPLSKAQKQGFPIRAVIRNSVANQDGKTNGITVPSAAAQSAAIEKAYAQVGLTPYADYVEAHGTGTTVGDPIEAKAIAKVLGAGRQSDSPLPIGSLKANIGHTESAAGLTGLVKAVLMLENNMIPPQVNYEKPNPEIDLDALNLRIPISLENKPLKRISVNSFGYGGTNAHVVVDAADAIPIKPTNTDSQETKDTLRVREQLFVLSAASEKSSQDLVLNVAKYLESKADAADTDALLSRLAYTLSRRTVMENRIGVVASDLADLVEQLTKLSSEGIPRADRQTSPRIGFVFSGQGAQYPRMGQSLLGTWPTFTSSMKRAAECVKACGSSWDLLEELLKDASESRMEDPCIAQPMSTAVQISLVDALKDLGVIPTAVVGHSSGEIAAAYCAEAISFEDAMTVSYHRGRLTSELRLENKGKAGSMIAVGASAATVKQSIDQLGTAAANRITIACHNSPASVTVSGDADVIESLKQRLDEQDIWNRLLRTGGAAYHSPQMLQIAQKYHEAIKDVSGSVPASNVAMASSVTGEDQGDKPITRDYWVHNLVSPVRFTDALKKTCVGENGTRKVDLLLELGSHFQLESPIKQTLRTFTGEAAKVHYTGSLKRGEDAQLSMLQMLRSLYLQKSPVAFWKVNAGFGATFQLLTDLPPYPFDHSKTYWHEGRVSRAYKHRQNLPHELLGTLVHDNNPQEPRWRCLLNLKDVPWLSGHIIQGQTIFPATAYLSMVFQAARQDMAARNPQASINRFILRNVTFSQALVMENNKTDLEISLSLRPQAISARKSSQQWQEFRIFSTSADDVWIEHVRGLVQVILKSEAVQEDSFVPTRITLPPHAQHIPANQFYHRARDIGVNWSAPFDNLNDIKIAAGSCIADSSFVAGPSAGACEKDYVIHPGVMDAILYHGMMGVLIFDENDKSPVVPTFIEKMIVAEQDQAKPIEEVTCHAARTESALTFDIGIFEKNHEDNMVLQAWGVVATKLPDVSIGEGRKRDLCHVPDWATYLPKTTQEYIDGLCKKSLDDRSIIPEIKALEAMTVHYVKQALASTPEDEVAEGYQRNWYNWMKTLADQEPDPEYLKAGEEDDSVSAQVARRLGPRLGDILRGTTHSLSILNEDSMLSGLYLEGGNVRCISQIATYMGELGRLNPNMKIVEVGAGTGSATLPVLQALQAPNRVLASQYDFTDISPGFFPAARELLADYEGVVQYKILNAEKTAEENGFEPNSYDVLIASNVLHATPCIDAVLENVKTMLRPGGKLILMEPTENLPHYGLVFGSLAGWWAGVDEGRTLSPMLSRSQWIETLSKNGFINNGPIFEDYPVAEGGSIHVFVSEVPVPASTEAPLDVDIVSYSGEATYTDFAERLQKNLWDRSVQSCNVSSSMSGDKLSVIMPDFVDRVAWDMDGPLFESLRSRVAGSKVIIFVMCTAKSKEKRPSGDWIYGFVRSIRYEYASVRLVTLELESGLEAGVDALKTILNSPTADLSLPLEDIELEYMEREGQIFVSRVRSEPKFDNYVSRDLGRAGSEEALFLNERPMSAELGVPGVLDTIRWVDNPEITGPVDPDCVRLQLCAASINFKDVLVASGQLEGITQMRNDCSGIVLDVGANMTDKFKVGDRVCSLYSQSFTNYPMVHGLCCHVIPDDMDFADAASIPLVWSTVYYCLITIARLQKGESILIHSAAGAVGQASIMLAHHIGAEVFVTCGNDAKVELLNTEFGIPRDHIFSSRTTVFRDKIRAMTNGNGVDVVLNSLGGEMFRESCNTLAAHGRFVEIGRKDLMENALMPMEFLLNNITFSYVDFAHILATRTALASQLLGDVMKLFASGAVQHVRQIKYPISEMASAFRLVQAGKHTGKVILTVEPDVKVQVVPSKPSPVQLKPDATYLVVGGLGGLGKRLVDWTAEKGARNIVIFSRTAQPDADAQSFLDKLVSMGVTVRVEKCDVSSEESVIEALARIQETMPPIRGLFQAAMVLHDILLEHMTVEEWCKVTAPKVQGTWNLHKYLPEDMDFFVMLSSVVSMVGTVGAGNYASACAFQDGIARYRRRLGLTAYAVNIGAIVEAGYVSENPEVAVNLRKNGLGSVAISEFLSHLGDVIQNKTEYSQSSLGILPNGNERGLGEARWANDKRLAQIFGAETQAGNKTVGGGADNVGFALQSATTFQEAQDIICDAIVKQLATILAIQSDDIIPARSLDSYGLDSLVGVELRNWIGAYLQVNLPLLVMWNTSSINELAEIVTKGSRLVKVKVEDTEEEQVDVVKD.

The disordered stretch occupies residues 1-48; that stretch reads MGSLSAVPATNGNHAALNGSASTNGQHVNGSTHVNGNHSLNGSAQVNG. Over residues 8-48 the composition is skewed to polar residues; sequence PATNGNHAALNGSASTNGQHVNGSTHVNGNHSLNGSAQVNG. One can recognise a Ketosynthase family 3 (KS3) domain in the interval 56–481; the sequence is LEPIAVVGMS…GTNAHVVVDA (426 aa). Active-site for beta-ketoacyl synthase activity residues include C230, H367, and H407. Positions 595-913 are malonyl-CoA:ACP transacylase (MAT) domain; that stretch reads VFSGQGAQYP…HYTGSLKRGE (319 aa). The interval 981–1119 is N-terminal hotdog fold; sequence HELLGTLVHD…GLVQVILKSE (139 aa). Positions 981-1281 are dehydratase (DH) domain; that stretch reads HELLGTLVHD…QAWGVVATKL (301 aa). Positions 981 to 1287 constitute a PKS/mFAS DH domain; that stretch reads HELLGTLVHD…ATKLPDVSIG (307 aa). The Proton acceptor; for dehydratase activity role is filled by H1013. Positions 1137-1287 are C-terminal hotdog fold; the sequence is AQHIPANQFY…ATKLPDVSIG (151 aa). Catalysis depends on D1200, which acts as the Proton donor; for dehydratase activity. Residues 1451 to 1556 form a methyltransferase (CMet) domain region; that stretch reads VEVGAGTGSA…KTMLRPGGKL (106 aa). The segment at 1840-2153 is enoyl reductase (ER) domain; sequence GVLDTIRWVD…AGKHTGKVIL (314 aa). The tract at residues 2177 to 2353 is ketoreductase (KR) domain; sequence ATYLVVGGLG…TAYAVNIGAI (177 aa). The region spanning 2457–2534 is the Carrier domain; sequence EAQDIICDAI…ELAEIVTKGS (78 aa). S2494 is subject to O-(pantetheine 4'-phosphoryl)serine.

It functions in the pathway secondary metabolite biosynthesis. Functionally, highly reducing polyketide synthase; part of the gene cluster that mediates the biosynthesis of the lipopeptide fusaristatin A. Fusaristatin A consists of a polyketide chain linked to three amino acid residues glutamine (Gln), dehydroalanine (dehydro-Ala), and beta-aminoisobutyric acid. The biosynthesis starts with formation of a linear polyketide chain by the highly reducing polyketide synthase PKS6. The gene cluster does not contain an acyl-CoA ligase or an acyl-transferase, and it is therefore predicted that the polyketide is transferred directly to the nonribosomal peptide synthetase NRPS7. Modules 1-3 from NRPS7 incorporate dehydro-Ala, Gln, and beta-aminoisobutyric acid in the compound, which is released by cyclization. The beta-aminoisobutyric acid units are most likely not freely available to the NRPS, but can be synthesized from thymine, which requires a dehydrogenase, a monooxygenase, and an aminotransferase. The fusaristatin A cluster contains a cytochrome P450 monooxygenase (FGSG_08207) and an aminotransferase (FGSG_17085), which theoretically can perform two of the enzymatic steps. The enzymes may however also be involved in biosynthesis of dehydroalanine or modification of the polyketide. The dehydro-Ala residue can be a result of cyclization, where serine is dehydrated. The last gene of the cluster encodes a protein with an A/B barrel domain found in variable enzymes, which hampers functional prediction. The polypeptide is Highly reducing polyketide synthase PKS6 (Gibberella zeae (strain ATCC MYA-4620 / CBS 123657 / FGSC 9075 / NRRL 31084 / PH-1) (Wheat head blight fungus)).